Reading from the N-terminus, the 196-residue chain is Small ribosomal subunit protein uS4c (196 aa).

The tract at residues 17–36 (ALPGLTRKTPKSGSNLKKKF) is disordered. An S4 RNA-binding domain is found at 89–150 (MRLDNILFRL…NQRSKRLIQN (62 aa)).

The protein belongs to the universal ribosomal protein uS4 family. In terms of assembly, part of the 30S ribosomal subunit. Contacts protein S5. The interaction surface between S4 and S5 is involved in control of translational fidelity.

It is found in the plastid. The protein resides in the chloroplast. Its function is as follows. One of the primary rRNA binding proteins, it binds directly to 16S rRNA where it nucleates assembly of the body of the 30S subunit. In terms of biological role, with S5 and S12 plays an important role in translational accuracy. The chain is Small ribosomal subunit protein uS4c (rps4) from Phyllostachys flexuosa (Drooping timber bamboo).